Reading from the N-terminus, the 541-residue chain is Chaperonin GroEL 2 (541 aa).

ATP contacts are provided by residues 29-32 (TLGP), 86-90 (DGTTT), Gly-413, 476-478 (NAA), and Asp-492.

Belongs to the chaperonin (HSP60) family. Forms a cylinder of 14 subunits composed of two heptameric rings stacked back-to-back. Interacts with the co-chaperonin GroES.

The protein resides in the secreted. It is found in the capsule. Its subcellular location is the cell surface. The protein localises to the cell wall. It carries out the reaction ATP + H2O + a folded polypeptide = ADP + phosphate + an unfolded polypeptide.. In terms of biological role, together with its co-chaperonin GroES, plays an essential role in assisting protein folding. The GroEL-GroES system forms a nano-cage that allows encapsulation of the non-native substrate proteins and provides a physical environment optimized to promote and accelerate protein folding. The chain is Chaperonin GroEL 2 from Mycolicibacterium gilvum (strain PYR-GCK) (Mycobacterium gilvum (strain PYR-GCK)).